The primary structure comprises 30 residues: Cliotide T19 (30 aa).

The cyclopeptide (Gly-Asn) cross-link spans 1–30; it reads GSVIKCGESCLLGKCYTPGCTCSRPICKKN. 3 disulfide bridges follow: C6-C20, C10-C22, and C15-C27.

Post-translationally, contains 3 disulfide bonds. In terms of processing, this is a cyclic peptide. In terms of tissue distribution, expressed in root nodules but not in seed.

Probably participates in a plant defense mechanism. Active against Gram-negative bacterium E.coli ATCC 700926 (MIC=0.6 uM) under low-salt conditions. Not active against Gram-positive bacterium S.aureus ATCC 12600 up to a concentration of 100 uM under low-salt conditions. Exhibits immunomodulatory activity but no cytotoxicity in vitro. This chain is Cliotide T19, found in Clitoria ternatea (Butterfly pea).